The following is a 171-amino-acid chain: Transcription antitermination protein NusB (171 aa).

Belongs to the NusB family.

Functionally, involved in transcription antitermination. Required for transcription of ribosomal RNA (rRNA) genes. Binds specifically to the boxA antiterminator sequence of the ribosomal RNA (rrn) operons. The chain is Transcription antitermination protein NusB from Brucella suis (strain ATCC 23445 / NCTC 10510).